The primary structure comprises 151 residues: U1 small nuclear ribonucleoprotein C (151 aa).

The Matrin-type zinc finger occupies phenylalanine 4 to glutamate 36.

Belongs to the U1 small nuclear ribonucleoprotein C family. U1 snRNP is composed of the 7 core Sm proteins B/B', D1, D2, D3, E, F and G that assemble in a heptameric protein ring on the Sm site of the small nuclear RNA to form the core snRNP, and at least 3 U1 snRNP-specific proteins U1-70K, U1-A and U1-C. U1-C interacts with U1 snRNA and the 5' splice-site region of the pre-mRNA.

The protein resides in the nucleus. In terms of biological role, component of the spliceosomal U1 snRNP, which is essential for recognition of the pre-mRNA 5' splice-site and the subsequent assembly of the spliceosome. U1-C is directly involved in initial 5' splice-site recognition for both constitutive and regulated alternative splicing. The interaction with the 5' splice-site seems to precede base-pairing between the pre-mRNA and the U1 snRNA. Stimulates commitment or early (E) complex formation by stabilizing the base pairing of the 5' end of the U1 snRNA and the 5' splice-site region. The sequence is that of U1 small nuclear ribonucleoprotein C from Theileria annulata.